Here is a 295-residue protein sequence, read N- to C-terminus: 4-hydroxy-tetrahydrodipicolinate synthase (295 aa).

Threonine 46 serves as a coordination point for pyruvate. Tyrosine 134 (proton donor/acceptor) is an active-site residue. The active-site Schiff-base intermediate with substrate is lysine 162. Isoleucine 205 serves as a coordination point for pyruvate.

The protein belongs to the DapA family. As to quaternary structure, homotetramer; dimer of dimers.

Its subcellular location is the cytoplasm. It carries out the reaction L-aspartate 4-semialdehyde + pyruvate = (2S,4S)-4-hydroxy-2,3,4,5-tetrahydrodipicolinate + H2O + H(+). The protein operates within amino-acid biosynthesis; L-lysine biosynthesis via DAP pathway; (S)-tetrahydrodipicolinate from L-aspartate: step 3/4. Its function is as follows. Catalyzes the condensation of (S)-aspartate-beta-semialdehyde [(S)-ASA] and pyruvate to 4-hydroxy-tetrahydrodipicolinate (HTPA). This chain is 4-hydroxy-tetrahydrodipicolinate synthase, found in Anaeromyxobacter sp. (strain Fw109-5).